The following is a 184-amino-acid chain: MGLEERLPGGILLSTVEKVAGYVRKGSLWPATFGLACCAIEMMATAGPRFDISRFGMERFSATPRQADLMIVAGRVSQKMAPVLRQIYDQMAEPKWVLAMGVCASSGGMFNNYAVVQGVDHVVPVDIYLPGCPPRPEMLLHAILKLHDKIQQMPLGVNREEAIREAERAALAVTPTIELKGLLR.

[4Fe-4S] cluster contacts are provided by cysteine 37, cysteine 38, cysteine 103, and cysteine 132.

It belongs to the complex I 20 kDa subunit family. NDH-1 is composed of 14 different subunits. Subunits NuoB, C, D, E, F, and G constitute the peripheral sector of the complex. The cofactor is [4Fe-4S] cluster.

The protein localises to the cell membrane. The catalysed reaction is a quinone + NADH + 5 H(+)(in) = a quinol + NAD(+) + 4 H(+)(out). Functionally, NDH-1 shuttles electrons from NADH, via FMN and iron-sulfur (Fe-S) centers, to quinones in the respiratory chain. The immediate electron acceptor for the enzyme in this species is believed to be a menaquinone. Couples the redox reaction to proton translocation (for every two electrons transferred, four hydrogen ions are translocated across the cytoplasmic membrane), and thus conserves the redox energy in a proton gradient. The sequence is that of NADH-quinone oxidoreductase subunit B from Mycolicibacterium vanbaalenii (strain DSM 7251 / JCM 13017 / BCRC 16820 / KCTC 9966 / NRRL B-24157 / PYR-1) (Mycobacterium vanbaalenii).